Here is a 315-residue protein sequence, read N- to C-terminus: Probable cell division protein WhiA (315 aa).

A DNA-binding region (H-T-H motif) is located at residues 275–309; the sequence is TLKELGEMVSSGTVSKSGVNHRLRKIDEIADALRR.

It belongs to the WhiA family.

In terms of biological role, involved in cell division and chromosome segregation. The protein is Probable cell division protein WhiA of Lysinibacillus sphaericus (strain C3-41).